The primary structure comprises 147 residues: Immunity protein YxxD (147 aa).

In terms of assembly, probably interacts with cognate toxin YxiD but not with other non-cognate toxins. The interaction inhibits the toxic activity of YxiD.

The protein resides in the cytoplasm. Immunity component of one of 6 LXG toxin-immunity modules in this strain. They promote kin selection, mediate competition in biofilms, and drive spatial segregation of different strains, indicating that LXG toxins may help avoid warfare between strains in biofilms. Mediates intercellular competition during biofilm formation; disruption of the operon disadvantages the bacteria, but overexpression of the cognate immunity protein restores growth in competition with wild-type. In situ neutralizes the toxic effect of cognate toxin YxiD. Neutralizes the toxic activity of cognate toxin YxiD upon expression in E.coli. Does not have immunity protein activity on other LXG toxins. This chain is Immunity protein YxxD (yxxD), found in Bacillus subtilis (strain 168).